Here is a 294-residue protein sequence, read N- to C-terminus: MASYGQTCPRPMCIPPSYADLGKAARDIFNKGFGFGLVKLDVKTKSCSGVEFSTSGSSNTDTGKVTGTLETKYKWCEYGLTFTEKWNTDNTLGTEIAIEDQICQGLKLTFDTTFSPNTGKKSGKIKSSYKRECVNLGCDVDFDFAGPAIHGSAVFGYEGWLAGYQMTFDSAKSKLTRNNFAVGYRTGDFQLHTNVNDGTEFGGSIYQKVCEDLDTSVNLAWTSGTNCTRFGIAAKYQLDPTASISAKVNNSSLIGVGYTQTLRPGVKLTLSALVDGKSINAGGHKLGLALELEA.

Residue A2 is modified to N-acetylalanine. The ATP site is built by K23 and K31. N6-acetyllysine; alternate is present on K31. N6-succinyllysine; alternate is present on K31. Residue K31 forms a Glycyl lysine isopeptide (Lys-Gly) (interchain with G-Cter in ubiquitin); alternate linkage. 2 beta stranded membrane passes run 37 to 46 (LVKLDVKTKS) and 50 to 58 (VEFSTSGSS). A Glycyl lysine isopeptide (Lys-Gly) (interchain with G-Cter in ubiquitin) cross-link involves residue K64. A beta stranded membrane pass occupies residues 65-75 (VTGTLETKYKW). Y78 bears the Phosphotyrosine mark. Transmembrane regions (beta stranded) follow at residues 80–87 (LTFTEKWN), 91–100 (TLGTEIAIED), and 106–115 (LKLTFDTTFS). T118 is modified (phosphothreonine). K120 carries the N6-acetyllysine; alternate modification. K120 is covalently cross-linked (Glycyl lysine isopeptide (Lys-Gly) (interchain with G-Cter in ubiquitin); alternate). K121 is covalently cross-linked (Glycyl lysine isopeptide (Lys-Gly) (interchain with G-Cter in ubiquitin)). 4 beta stranded membrane-spanning segments follow: residues 122–131 (SGKIKSSYKR), 134–141 (VNLGCDVD), 148–156 (AIHGSAVFG), and 161–169 (LAGYQMTFD). A Glycyl lysine isopeptide (Lys-Gly) (interchain with G-Cter in ubiquitin) cross-link involves residue K172. A run of 6 beta stranded transmembrane segments spans residues 174–186 (KLTR…GYRT), 189–196 (FQLHTNVN), 200–209 (EFGGSIYQKV), 213–222 (LDTSVNLAWT), 229–238 (RFGIAAKYQL), and 242–249 (ASISAKVN). S251 is modified (phosphoserine). NAD(+) is bound by residues 253 to 255 (LIG) and 271 to 275 (SALVD). 2 consecutive transmembrane segments (beta stranded) span residues 253-262 (LIGVGYTQTL) and 265-274 (GVKLTLSALV). The residue at position 277 (K277) is an N6-acetyllysine; alternate. K277 participates in a covalent cross-link: Glycyl lysine isopeptide (Lys-Gly) (interchain with G-Cter in ubiquitin); alternate. The chain crosses the membrane as a beta stranded span at residues 284 to 293 (HKLGLALELE).

Belongs to the eukaryotic mitochondrial porin family. In terms of assembly, monomer, homodimer and higher order oligomers; formation of higher order structures is necessary for scramblase activity. Interacts with ARMC12 in a TBC1D21-dependent manner. Interacts with KLC3. Interacts with SPATA33. Interacts with PPP3CC in a SPATA33-dependent manner. Ubiquitinated by PRKN during mitophagy, leading to its degradation and enhancement of mitophagy. Deubiquitinated by USP30.

Its subcellular location is the mitochondrion outer membrane. The protein resides in the membrane. The enzyme catalyses chloride(in) = chloride(out). It catalyses the reaction K(+)(in) = K(+)(out). It carries out the reaction a 1,2-diacyl-sn-glycero-3-phospho-L-serine(in) = a 1,2-diacyl-sn-glycero-3-phospho-L-serine(out). The catalysed reaction is a 1,2-diacyl-sn-glycero-3-phosphocholine(in) = a 1,2-diacyl-sn-glycero-3-phosphocholine(out). The enzyme catalyses a 1,2-diacyl-sn-glycero-3-phospho-(1D-myo-inositol)(in) = a 1,2-diacyl-sn-glycero-3-phospho-(1D-myo-inositol)(out). In terms of biological role, non-selective voltage-gated ion channel that mediates the transport of anions and cations through the mitochondrion outer membrane and plasma membrane. The channel adopts an open conformation at zero mV and a closed conformation at both positive and negative potentials. There are two populations of channels; the main that functions in a lower open-state conductance with lower ion selectivity, that switch, in a voltage-dependent manner, from the open to a low-conducting 'closed' state and the other that has a normal ion selectivity in the typical high conductance, 'open' state. Binds various lipids, including the sphingolipid ceramide, the phospholipid phosphatidylcholine, and the sterols cholesterol and oxysterol. Binding of ceramide promotes the mitochondrial outer membrane permeabilization (MOMP) apoptotic pathway. Functionally, catalyzes the scrambling of phospholipids across the outer mitochondrial membrane; the mechanism is unrelated to channel activity and is capable of translocating both anionic and zwitterionic phospholipids. This chain is Non-selective voltage-gated ion channel VDAC2, found in Sus scrofa (Pig).